The following is a 996-amino-acid chain: Disease resistance protein RGA4 (996 aa).

The structured coiled coil (CC) domain stretch occupies residues 1–176 (MEAALLSGFI…PRIHEADLVG (176 aa)). Residues 111–138 (NLQLAQQLQRLKRMAAEANQRKQRYTAA) are a coiled coil. An NB-ARC domain is found at 180–462 (DREELLEQLA…RWLAEGFVEP (283 aa)). LRR repeat units follow at residues 481–503 (RNII…TYGM), 504–528 (MREF…KFVP), 529–549 (KYVR…NFNG), 577–599 (LRVL…ICNL), 600–621 (VLLK…IAKL), 622–644 (KDLE…VFGL), 698–722 (MNKL…DLRE), 759–781 (PCYL…VTSL), 782–804 (RGLK…ALSN), 805–830 (LSYL…GFPR), and 851–874 (LPFL…QIEC).

It belongs to the disease resistance NB-LRR family. Forms homodimer or heterodimer with RGA5 through its coiled coil (CC) domain. As to expression, expressed in leaves.

It is found in the cytoplasm. Functionally, disease resistance (R) protein. Resistance proteins guard the plant against pathogens that contain an appropriate avirulence protein via an indirect interaction with this avirulence protein. That triggers a defense system including the hypersensitive response, which restricts the pathogen growth. Contribution of RGA5 is required to recognize the effector avirulence proteins AVR-Pia and AVR1-CO39 from M.oryzae. Acts as a constitutively active cell death inducer that is repressed by RGA5. Immune response triggered by the RGA4-RGA5 -mediated recognition of AVR1-CO39 confers resistance to X.oryzae pathovars. This is Disease resistance protein RGA4 from Oryza sativa subsp. japonica (Rice).